Here is a 372-residue protein sequence, read N- to C-terminus: Chaperone protein DnaJ (372 aa).

The 65-residue stretch at 5–69 (DYYEVLGLTK…QKKARYDQFG (65 aa)) folds into the J domain. The CR-type zinc-finger motif lies at 129-211 (GKETEIEIPK…CRGEGKVQKR (83 aa)). The Zn(2+) site is built by Cys142, Cys145, Cys159, Cys162, Cys185, Cys188, Cys199, and Cys202. 4 CXXCXGXG motif repeats span residues 142-149 (CETCHGSG), 159-166 (CSTCNGAG), 185-192 (CTTCHGTG), and 199-206 (CSTCRGEG).

It belongs to the DnaJ family. Homodimer. Requires Zn(2+) as cofactor.

It is found in the cytoplasm. In terms of biological role, participates actively in the response to hyperosmotic and heat shock by preventing the aggregation of stress-denatured proteins and by disaggregating proteins, also in an autonomous, DnaK-independent fashion. Unfolded proteins bind initially to DnaJ; upon interaction with the DnaJ-bound protein, DnaK hydrolyzes its bound ATP, resulting in the formation of a stable complex. GrpE releases ADP from DnaK; ATP binding to DnaK triggers the release of the substrate protein, thus completing the reaction cycle. Several rounds of ATP-dependent interactions between DnaJ, DnaK and GrpE are required for fully efficient folding. Also involved, together with DnaK and GrpE, in the DNA replication of plasmids through activation of initiation proteins. The polypeptide is Chaperone protein DnaJ (Lysinibacillus sphaericus (strain C3-41)).